The sequence spans 1481 residues: DNA-directed RNA polymerase subunit beta'' (1481 aa).

C217, C291, C298, and C301 together coordinate Zn(2+).

It belongs to the RNA polymerase beta' chain family. RpoC2 subfamily. In terms of assembly, in plastids the minimal PEP RNA polymerase catalytic core is composed of four subunits: alpha, beta, beta', and beta''. When a (nuclear-encoded) sigma factor is associated with the core the holoenzyme is formed, which can initiate transcription. Requires Zn(2+) as cofactor.

The protein localises to the plastid. It is found in the chloroplast. The enzyme catalyses RNA(n) + a ribonucleoside 5'-triphosphate = RNA(n+1) + diphosphate. Its function is as follows. DNA-dependent RNA polymerase catalyzes the transcription of DNA into RNA using the four ribonucleoside triphosphates as substrates. The polypeptide is DNA-directed RNA polymerase subunit beta'' (Trieres chinensis (Marine centric diatom)).